Consider the following 399-residue polypeptide: Probable peptidoglycan glycosyltransferase FtsW (399 aa).

Helical transmembrane passes span 19 to 39, 61 to 81, 85 to 105, 114 to 134, 160 to 180, 198 to 218, 285 to 305, 314 to 334, and 350 to 370; these read PLPVLIITSVALLVTGVVMIS, ILFAGLGCATALVAVNVPVSW, SGWLLLGIGLLVLVLVLTPLG, WIPMGLFNVQVSEVAKLCLIA, VLGVASVLLVIQPDFGATVVL, FMPLIGVLAALGTILVVTQPY, LLGALVVLGLFAALVVSGLVI, MAFGACFSYGITLLIGLQAGI, and LPLVSYGGSSLMVTCIGIAVI.

Belongs to the SEDS family. FtsW subfamily.

The protein resides in the cell inner membrane. It catalyses the reaction [GlcNAc-(1-&gt;4)-Mur2Ac(oyl-L-Ala-gamma-D-Glu-L-Lys-D-Ala-D-Ala)](n)-di-trans,octa-cis-undecaprenyl diphosphate + beta-D-GlcNAc-(1-&gt;4)-Mur2Ac(oyl-L-Ala-gamma-D-Glu-L-Lys-D-Ala-D-Ala)-di-trans,octa-cis-undecaprenyl diphosphate = [GlcNAc-(1-&gt;4)-Mur2Ac(oyl-L-Ala-gamma-D-Glu-L-Lys-D-Ala-D-Ala)](n+1)-di-trans,octa-cis-undecaprenyl diphosphate + di-trans,octa-cis-undecaprenyl diphosphate + H(+). The protein operates within cell wall biogenesis; peptidoglycan biosynthesis. Peptidoglycan polymerase that is essential for cell division. This Marinobacter nauticus (strain ATCC 700491 / DSM 11845 / VT8) (Marinobacter aquaeolei) protein is Probable peptidoglycan glycosyltransferase FtsW.